The sequence spans 410 residues: Ribosomal RNA large subunit methyltransferase G (410 aa).

Belongs to the methyltransferase superfamily. RlmG family.

Its subcellular location is the cytoplasm. It catalyses the reaction guanosine(1835) in 23S rRNA + S-adenosyl-L-methionine = N(2)-methylguanosine(1835) in 23S rRNA + S-adenosyl-L-homocysteine + H(+). In terms of biological role, specifically methylates the guanine in position 1835 (m2G1835) of 23S rRNA. The protein is Ribosomal RNA large subunit methyltransferase G of Alteromonas mediterranea (strain DSM 17117 / CIP 110805 / LMG 28347 / Deep ecotype).